Here is a 217-residue protein sequence, read N- to C-terminus: Uridylate kinase (217 aa).

5 to 9 (KLTGR) contributes to the ATP binding site. A UMP-binding site is contributed by glycine 37. 2 residues coordinate ATP: glycine 38 and arginine 42. UMP-binding positions include aspartate 59 and 107-113 (FQPGQST). The ATP site is built by asparagine 134, tyrosine 139, and aspartate 142.

Belongs to the UMP kinase family. As to quaternary structure, homohexamer.

Its subcellular location is the cytoplasm. It catalyses the reaction UMP + ATP = UDP + ADP. Its pathway is pyrimidine metabolism; CTP biosynthesis via de novo pathway; UDP from UMP (UMPK route): step 1/1. Inhibited by UTP. In terms of biological role, catalyzes the reversible phosphorylation of UMP to UDP. In Pyrobaculum calidifontis (strain DSM 21063 / JCM 11548 / VA1), this protein is Uridylate kinase.